Here is a 550-residue protein sequence, read N- to C-terminus: Protein UshA (550 aa).

Residues 1 to 25 (MRFSLSTTAAALAVSLAFAPGWAVA) form the signal peptide. A divalent metal cation-binding residues include Asp-41, His-43, Asp-84, Asn-116, His-217, His-252, and Gln-254. Residues Cys-258 and Cys-275 are joined by a disulfide bond. Residues 375–379 (RSKVR) and 498–504 (FNALGGD) contribute to the substrate site.

Belongs to the 5'-nucleotidase family. Requires Co(2+) as cofactor.

It is found in the periplasm. The enzyme catalyses UDP-sugar + H2O = UMP + alpha-D-aldose 1-phosphate.. It catalyses the reaction a ribonucleoside 5'-phosphate + H2O = a ribonucleoside + phosphate. In terms of biological role, degradation of external UDP-glucose to uridine monophosphate and glucose-1-phosphate, which can then be used by the cell. The chain is Protein UshA (ushA) from Yersinia enterocolitica serotype O:8 / biotype 1B (strain NCTC 13174 / 8081).